The following is a 152-amino-acid chain: Transcriptional regulator MraZ (152 aa).

SpoVT-AbrB domains follow at residues 5–52 (ASAI…PVQE) and 81–124 (AHEC…DEAA).

The protein belongs to the MraZ family. As to quaternary structure, forms oligomers.

Its subcellular location is the cytoplasm. It is found in the nucleoid. This chain is Transcriptional regulator MraZ, found in Shewanella piezotolerans (strain WP3 / JCM 13877).